The chain runs to 324 residues: Quinolinate synthase (324 aa).

The iminosuccinate site is built by H44 and S62. Residue C107 participates in [4Fe-4S] cluster binding. Iminosuccinate-binding positions include 133–135 and S150; that span reads YVN. Residue C192 coordinates [4Fe-4S] cluster. Iminosuccinate-binding positions include 218–220 and T235; that span reads HPE. C278 contacts [4Fe-4S] cluster.

Belongs to the quinolinate synthase family. Type 2 subfamily. [4Fe-4S] cluster is required as a cofactor.

It localises to the cytoplasm. The catalysed reaction is iminosuccinate + dihydroxyacetone phosphate = quinolinate + phosphate + 2 H2O + H(+). It participates in cofactor biosynthesis; NAD(+) biosynthesis; quinolinate from iminoaspartate: step 1/1. In terms of biological role, catalyzes the condensation of iminoaspartate with dihydroxyacetone phosphate to form quinolinate. This is Quinolinate synthase from Leptospira interrogans serogroup Icterohaemorrhagiae serovar copenhageni (strain Fiocruz L1-130).